We begin with the raw amino-acid sequence, 464 residues long: Olfactomedin (464 aa).

Residues 1–16 form the signal peptide; that stretch reads MYICLLTLVLIHAAAA. N-linked (GlcNAc...) asparagine glycans are attached at residues Asn-21, Asn-85, Asn-143, Asn-228, Asn-279, and Asn-383. The Olfactomedin-like domain occupies 192–464; sequence SCQHQGLAHI…LLHYDIALKP (273 aa). Cys-193 and Cys-394 are disulfide-bonded.

In terms of assembly, oligomer; disulfide-linked. Most, if not all, of the six potential sites for N-glycosylation carry carbohydrate moieties of 8-10 sugar residues. Expressed exclusively in olfactory neuroepithelium.

It localises to the secreted. The protein resides in the extracellular space. Functionally, may influence the maintenance, growth, or differentiation of chemosensory cilia on the apical dendrites of olfactory neurons. Major component of the extracellular matrix of the olfactory neuroepithelium. The polypeptide is Olfactomedin (Aquarana catesbeiana (American bullfrog)).